We begin with the raw amino-acid sequence, 362 residues long: Ferrochelatase (362 aa).

Residues H212 and E294 each contribute to the Fe cation site.

This sequence belongs to the ferrochelatase family.

Its subcellular location is the cytoplasm. It catalyses the reaction heme b + 2 H(+) = protoporphyrin IX + Fe(2+). Its pathway is porphyrin-containing compound metabolism; protoheme biosynthesis; protoheme from protoporphyrin-IX: step 1/1. Functionally, catalyzes the ferrous insertion into protoporphyrin IX. In Leptospira biflexa, this protein is Ferrochelatase.